We begin with the raw amino-acid sequence, 376 residues long: Phytanoyl-CoA hydroxylase-interacting protein-like (376 aa).

In terms of domain architecture, Fibronectin type-III spans 52-161 (VPHNIKISNI…EIIEFCTADY (110 aa)).

The protein belongs to the PHYHIP family.

In terms of biological role, may play a role in the development of the central system. This is Phytanoyl-CoA hydroxylase-interacting protein-like (phyhipl) from Xenopus tropicalis (Western clawed frog).